An 870-amino-acid polypeptide reads, in one-letter code: DNA mismatch repair protein MutS (870 aa).

Position 616-623 (616-623 (GPNMAGKS)) interacts with ATP.

It belongs to the DNA mismatch repair MutS family.

In terms of biological role, this protein is involved in the repair of mismatches in DNA. It is possible that it carries out the mismatch recognition step. This protein has a weak ATPase activity. This chain is DNA mismatch repair protein MutS, found in Parabacteroides distasonis (strain ATCC 8503 / DSM 20701 / CIP 104284 / JCM 5825 / NCTC 11152).